A 359-amino-acid polypeptide reads, in one-letter code: Cytoplasmic tRNA 2-thiolation protein 1 (359 aa).

It belongs to the TtcA family. CTU1/NCS6/ATPBD3 subfamily. In terms of assembly, interacts with NCS2 and URM1. May act by forming a heterodimer with NCS2. Component of a large molecular weight complex of more than 250 kDa.

It is found in the cytoplasm. It localises to the mitochondrion. It functions in the pathway tRNA modification; 5-methoxycarbonylmethyl-2-thiouridine-tRNA biosynthesis. Plays a central role in 2-thiolation of mcm(5)S(2)U at tRNA wobble positions of tRNA(Lys), tRNA(Glu) and tRNA(Gln). Directly binds tRNAs and probably acts by catalyzing adenylation of tRNAs, an intermediate required for 2-thiolation. It is unclear whether it acts as a sulfurtransferase that transfers sulfur from thiocarboxylated URM1 onto the uridine of tRNAs at wobble position. Prior mcm(5) tRNA modification by the elongator complex is required for 2-thiolation. May also be involved in protein urmylation. This chain is Cytoplasmic tRNA 2-thiolation protein 1, found in Saccharomyces cerevisiae (strain RM11-1a) (Baker's yeast).